Consider the following 223-residue polypeptide: MHLKKALCPALCTFLIHLCLHAGERTVPVDIFLMIDKSRSMQEPGKFSSLHRWVRDEFVSSMTIQGDWITVYQFYEKPEELITLTLRSEQDRDKIISVVDSIVPNGRYTDIGRALDTVWEIQEKRKDNNRHKVLLLVTDLEHDAPLTSKYRGKQRSFQSPYLVRARRVKHDNWYEITLDMAVHDRVAHTARELYRSIAAAHSKRPTPTPPAKESSPRYTPSLD.

An N-terminal signal peptide occupies residues 1–22 (MHLKKALCPALCTFLIHLCLHA). Residues 30 to 204 (DIFLMIDKSR…RSIAAAHSKR (175 aa)) form the VWFA domain. The disordered stretch occupies residues 199–223 (AAHSKRPTPTPPAKESSPRYTPSLD).

This is an uncharacterized protein from Treponema pallidum (strain Nichols).